Consider the following 205-residue polypeptide: dTTP/UTP pyrophosphatase (205 aa).

The active-site Proton acceptor is Asp-81.

This sequence belongs to the Maf family. YhdE subfamily. The cofactor is a divalent metal cation.

The protein resides in the cytoplasm. The catalysed reaction is dTTP + H2O = dTMP + diphosphate + H(+). The enzyme catalyses UTP + H2O = UMP + diphosphate + H(+). In terms of biological role, nucleoside triphosphate pyrophosphatase that hydrolyzes dTTP and UTP. May have a dual role in cell division arrest and in preventing the incorporation of modified nucleotides into cellular nucleic acids. The chain is dTTP/UTP pyrophosphatase from Agathobacter rectalis (strain ATCC 33656 / DSM 3377 / JCM 17463 / KCTC 5835 / VPI 0990) (Eubacterium rectale).